We begin with the raw amino-acid sequence, 164 residues long: Shikimate kinase (164 aa).

11–16 (GSGKST) contacts ATP. Serine 15 is a Mg(2+) binding site. Residues aspartate 33, arginine 57, and glycine 79 each contribute to the substrate site. Residue arginine 117 participates in ATP binding. Arginine 134 contacts substrate.

This sequence belongs to the shikimate kinase family. As to quaternary structure, monomer. Mg(2+) serves as cofactor.

It is found in the cytoplasm. It catalyses the reaction shikimate + ATP = 3-phosphoshikimate + ADP + H(+). It participates in metabolic intermediate biosynthesis; chorismate biosynthesis; chorismate from D-erythrose 4-phosphate and phosphoenolpyruvate: step 5/7. Functionally, catalyzes the specific phosphorylation of the 3-hydroxyl group of shikimic acid using ATP as a cosubstrate. The polypeptide is Shikimate kinase (Persephonella marina (strain DSM 14350 / EX-H1)).